A 388-amino-acid polypeptide reads, in one-letter code: Chorismate synthase (388 aa).

NADP(+)-binding residues include arginine 39 and arginine 45. Residues 130-132 (RSS), 251-252 (NA), glycine 296, 311-315 (KPIPT), and arginine 337 contribute to the FMN site.

Belongs to the chorismate synthase family. Homotetramer. FMNH2 serves as cofactor.

The catalysed reaction is 5-O-(1-carboxyvinyl)-3-phosphoshikimate = chorismate + phosphate. It participates in metabolic intermediate biosynthesis; chorismate biosynthesis; chorismate from D-erythrose 4-phosphate and phosphoenolpyruvate: step 7/7. Functionally, catalyzes the anti-1,4-elimination of the C-3 phosphate and the C-6 proR hydrogen from 5-enolpyruvylshikimate-3-phosphate (EPSP) to yield chorismate, which is the branch point compound that serves as the starting substrate for the three terminal pathways of aromatic amino acid biosynthesis. This reaction introduces a second double bond into the aromatic ring system. The protein is Chorismate synthase of Streptococcus pneumoniae (strain 70585).